A 52-amino-acid chain; its full sequence is Proteinase inhibitor PSI-1.2 (52 aa).

4 disulfide bridges follow: Cys-3/Cys-32, Cys-7/Cys-28, Cys-16/Cys-38, and Cys-31/Cys-49.

In terms of biological role, potent inhibitor of trypsin and a weaker inhibitor of chymotrypsin. It does not inhibit elastase and subtilisin DY. The polypeptide is Proteinase inhibitor PSI-1.2 (Capsicum annuum (Capsicum pepper)).